The following is a 1187-amino-acid chain: Nucleolar protein 6 (1187 aa).

Over residues 1 to 20 (MGRIKENQSKKKTLLRDSKA) the composition is skewed to basic and acidic residues. 2 disordered regions span residues 1-64 (MGRI…FKHP) and 1134-1187 (REQR…SALC).

It belongs to the NRAP family. In terms of assembly, part of the small subunit (SSU) processome, composed of more than 70 proteins and the RNA chaperone small nucleolar RNA (snoRNA) U3.

It localises to the nucleus. Its subcellular location is the nucleolus. The protein localises to the chromosome. Functionally, part of the small subunit (SSU) processome, first precursor of the small eukaryotic ribosomal subunit. During the assembly of the SSU processome in the nucleolus, many ribosome biogenesis factors, an RNA chaperone and ribosomal proteins associate with the nascent pre-rRNA and work in concert to generate RNA folding, modifications, rearrangements and cleavage as well as targeted degradation of pre-ribosomal RNA by the RNA exosome. The protein is Nucleolar protein 6 of Drosophila mojavensis (Fruit fly).